Reading from the N-terminus, the 308-residue chain is Spermidine synthase 2 (308 aa).

A PABS domain is found at 17-254 (PGWFSEISPL…GVIGFMLCST (238 aa)). Gln48 lines the S-adenosyl 3-(methylsulfanyl)propylamine pocket. Position 78 (Tyr78) interacts with putrescine. Residues Gln79, Asp103, Glu123, 154 to 155 (DG), and Asp173 each bind S-adenosyl 3-(methylsulfanyl)propylamine. Asp173 serves as the catalytic Proton acceptor. Putrescine contacts are provided by residues 173-176 (DSSD) and Tyr242.

The protein belongs to the spermidine/spermine synthase family.

It catalyses the reaction S-adenosyl 3-(methylsulfanyl)propylamine + putrescine = S-methyl-5'-thioadenosine + spermidine + H(+). Its pathway is amine and polyamine biosynthesis; spermidine biosynthesis; spermidine from putrescine: step 1/1. In Hyoscyamus niger (Black henbane), this protein is Spermidine synthase 2.